The sequence spans 603 residues: Ankyrin repeat and LEM domain-containing protein 2 homolog (603 aa).

Residues 2–22 (GRKSAILAVILAIIYFRSNFS) form a helical; Signal-anchor for type III membrane protein membrane-spanning segment. 2 ANK repeats span residues 161 to 190 (FRYNALHIAAKAGQTEIIAKILELIQNIDF) and 221 to 250 (NSDTPLHFASKFGKIGVVRVLTENSATDRT). Disordered regions lie at residues 446–465 (ISENLTPDGSDSADDEDDDD) and 505–538 (LPPPPPPQWSNSPNFDYSEGEDSFATPPTTPPPT). Positions 456–465 (DSADDEDDDD) are enriched in acidic residues.

The protein belongs to the ANKLE2 family. As to quaternary structure, interacts with baf-1. Interacts with protein phosphatase 2A (PP2A) components.

It is found in the nucleus membrane. Functionally, involved in mitotic nuclear envelope reassembly by promoting dephosphorylation of baf-1 during mitotic exit. Coordinates the control of baf-1 dephosphorylation by inhibiting VRK1 kinase and promoting dephosphorylation of baf-1 by protein phosphatase 2A (PP2A), thereby facilitating nuclear envelope assembly. It is unclear whether it acts as a real PP2A regulatory subunit or whether it is involved in recruitment of the PP2A complex. The polypeptide is Ankyrin repeat and LEM domain-containing protein 2 homolog (lem-4) (Caenorhabditis elegans).